The sequence spans 588 residues: MNNSINHKFHHISRAEYQELLAVSRGDAVADYIIDNVSILDLINGGEISGPIVIKGRYIAGVGAEYTDAPALQRIDARGATAVPGFIDAHLHIESSMMTPVTFETATLPRGLTTVICDPHEIVNVMGEAGFAWFARCAEQARQNQYLQVSSCVPALEGCDVNGASFTLEQMLAWRDHPQVTGLAEMMDYPGVISGQNALLDKLDAFRHLTLDGHCPGLGGKELNAYITAGIENCHESYQLEEGRRKLQLGMSLMIREGSAARNLNALAPLINEFNSPQCMLCTDDRNPWEIAHEGHIDALIRRLIEQHNVPLHVAYRVASWSTARHFGLNHLGLLAPGKQADIVLLSDARKVTVQQVLVKGEPIDAQTLQAEESARLAQSAPPYGNTIARQPVSASDFALQFTPGKRYRVIDVIHNELITHSHSSVYSENGFDRDDVSFIAVLERYGQRLAPACGLLGGFGLNEGALAATVSHDSHNIVVIGRSAEEMALAVNQVIQDGGGLCVVRNGQVQSHLPLPIAGLMSTDTAQSLAEQIDALKAAARECGPLPDEPFIQMAFLSLPVIPALKLTSQGLFDGEKFAFTTLEVTE.

The protein belongs to the metallo-dependent hydrolases superfamily. Adenine deaminase family. Homodimer. Requires Mn(2+) as cofactor.

The enzyme catalyses adenine + H2O + H(+) = hypoxanthine + NH4(+). The chain is Adenine deaminase from Escherichia coli (strain K12 / DH10B).